Reading from the N-terminus, the 250-residue chain is Probable aquaporin TIP-type (250 aa).

The next 2 membrane-spanning stretches (helical) occupy residues 22-42 (AGLAEFISTFIFVFAGSGSGI) and 56-76 (AGLISASIAHAFALFVAVSVG). Residues 85–87 (NPA) carry the NPA 1 motif. A run of 3 helical transmembrane segments spans residues 104–124 (IVYIIAQLLGSIVASALLVFV), 138–158 (VGVGPALVLEIVMTFGLVYTV), and 170–190 (IGIIAPIAIGFIVGANILVGG). The NPA 2 motif lies at 198 to 200 (NPA). The chain crosses the membrane as a helical span at residues 218–238 (YWAGPLIGGGIAGLVYEVLFI).

It belongs to the MIP/aquaporin (TC 1.A.8) family. TIP (TC 1.A.8.10) subfamily.

The protein localises to the membrane. In terms of biological role, aquaporins facilitate the transport of water and small neutral solutes across cell membranes. May have a role in buffering osmotic fluctations in the highly compartmented vacuole of arbuscule cells. The protein is Probable aquaporin TIP-type (AQP1) of Medicago truncatula (Barrel medic).